A 419-amino-acid polypeptide reads, in one-letter code: Elongation factor Tu, chloroplastic (419 aa).

In terms of domain architecture, tr-type G spans 10 to 214; the sequence is KPHVNIGTIG…AVDSYIPTPK (205 aa). The G1 stretch occupies residues 19–26; the sequence is GHVDHGKT. Residue 19–26 participates in GTP binding; the sequence is GHVDHGKT. Mg(2+) is bound at residue Thr-26. The tract at residues 60-64 is G2; it reads GITIN. The G3 stretch occupies residues 81–84; the sequence is DCPG. GTP is bound by residues 81–85 and 136–139; these read DCPGH and NKED. The interval 136–139 is G4; it reads NKED. The G5 stretch occupies residues 174 to 176; sequence SAL.

It belongs to the TRAFAC class translation factor GTPase superfamily. Classic translation factor GTPase family. EF-Tu/EF-1A subfamily.

The protein resides in the plastid. Its subcellular location is the chloroplast. It catalyses the reaction GTP + H2O = GDP + phosphate + H(+). GTP hydrolase that promotes the GTP-dependent binding of aminoacyl-tRNA to the A-site of ribosomes during protein biosynthesis. The polypeptide is Elongation factor Tu, chloroplastic (tufA) (Chara vulgaris (Common stonewort)).